Here is a 263-residue protein sequence, read N- to C-terminus: MSDILNISCYKFTPLPDAAALRDTLAERAQALALKGTILLAEEGINFFLAGPAQAVHSFVDQLRADDRFADLAPKESWSDTVPFRKMLVKVKREIIRMDHPTIRPAEGRAPSVSPATLRRWLEQGHDDEGREVVTLDTRNDFEVDAGAFKDTIDWRITKFTEFPPALRAHKAELADKTVVSYCTGGIRCEKAAILMRDEGLEHVYQLEGGILKYFEETDGAFYDGGCFVFDERRAVGADLAITPLAPAEPLEPIQPTSPPGKA.

A Rhodanese domain is found at 129–223 (EGREVVTLDT…YFEETDGAFY (95 aa)). The active-site Cysteine persulfide intermediate is C183.

Belongs to the TrhO family.

It carries out the reaction uridine(34) in tRNA + AH2 + O2 = 5-hydroxyuridine(34) in tRNA + A + H2O. Its function is as follows. Catalyzes oxygen-dependent 5-hydroxyuridine (ho5U) modification at position 34 in tRNAs. The chain is tRNA uridine(34) hydroxylase from Delftia acidovorans (strain DSM 14801 / SPH-1).